Here is a 247-residue protein sequence, read N- to C-terminus: Triosephosphate isomerase (247 aa).

Substrate contacts are provided by N10 and K12. The active-site Electrophile is the H94. The Proton acceptor role is filled by E164.

It belongs to the triosephosphate isomerase family. As to quaternary structure, homodimer.

It carries out the reaction D-glyceraldehyde 3-phosphate = dihydroxyacetone phosphate. It participates in carbohydrate biosynthesis; gluconeogenesis. Its pathway is carbohydrate degradation; glycolysis; D-glyceraldehyde 3-phosphate from glycerone phosphate: step 1/1. The chain is Triosephosphate isomerase (Tpi) from Drosophila simulans (Fruit fly).